The primary structure comprises 241 residues: Proteasome subunit beta type-1 (241 aa).

Position 1 is an N-acetylmethionine (M1). The propeptide occupies 1–28 (MLSSVAAYSGAGRDLAMEPHSSVGPLQL). S58 carries O-linked (GlcNAc) serine glycosylation. Residues S62 and S68 each carry the phosphoserine modification. The residue at position 150 (Y150) is a Phosphotyrosine. The residue at position 162 (S162) is a Phosphoserine. K204 is subject to N6-acetyllysine. An O-linked (GlcNAc) serine glycan is attached at S209.

It belongs to the peptidase T1B family. As to quaternary structure, the 26S proteasome consists of a 20S proteasome core and two 19S regulatory subunits. The 20S proteasome core is a barrel-shaped complex made of 28 subunits that are arranged in four stacked rings. The two outer rings are each formed by seven alpha subunits, and the two inner rings are formed by seven beta subunits. The proteolytic activity is exerted by three beta-subunits PSMB5, PSMB6 and PSMB7. Interacts with SERPINB2. Interacts with RFPL4A.

Its subcellular location is the cytoplasm. It localises to the nucleus. Functionally, non-catalytic component of the 20S core proteasome complex involved in the proteolytic degradation of most intracellular proteins. This complex plays numerous essential roles within the cell by associating with different regulatory particles. Associated with two 19S regulatory particles, forms the 26S proteasome and thus participates in the ATP-dependent degradation of ubiquitinated proteins. The 26S proteasome plays a key role in the maintenance of protein homeostasis by removing misfolded or damaged proteins that could impair cellular functions, and by removing proteins whose functions are no longer required. Associated with the PA200 or PA28, the 20S proteasome mediates ubiquitin-independent protein degradation. This type of proteolysis is required in several pathways including spermatogenesis (20S-PA200 complex) or generation of a subset of MHC class I-presented antigenic peptides (20S-PA28 complex). This is Proteasome subunit beta type-1 (PSMB1) from Bos taurus (Bovine).